Reading from the N-terminus, the 333-residue chain is UDP-3-O-acylglucosamine N-acyltransferase (333 aa).

The Proton acceptor role is filled by histidine 225.

Belongs to the transferase hexapeptide repeat family. LpxD subfamily. In terms of assembly, homotrimer.

It carries out the reaction a UDP-3-O-[(3R)-3-hydroxyacyl]-alpha-D-glucosamine + a (3R)-hydroxyacyl-[ACP] = a UDP-2-N,3-O-bis[(3R)-3-hydroxyacyl]-alpha-D-glucosamine + holo-[ACP] + H(+). It functions in the pathway bacterial outer membrane biogenesis; LPS lipid A biosynthesis. Functionally, catalyzes the N-acylation of UDP-3-O-acylglucosamine using 3-hydroxyacyl-ACP as the acyl donor. Is involved in the biosynthesis of lipid A, a phosphorylated glycolipid that anchors the lipopolysaccharide to the outer membrane of the cell. In Paracidovorax citrulli (strain AAC00-1) (Acidovorax citrulli), this protein is UDP-3-O-acylglucosamine N-acyltransferase.